The primary structure comprises 187 residues: Ribosome-recycling factor (187 aa).

It belongs to the RRF family.

It is found in the cytoplasm. Responsible for the release of ribosomes from messenger RNA at the termination of protein biosynthesis. May increase the efficiency of translation by recycling ribosomes from one round of translation to another. The chain is Ribosome-recycling factor from Orientia tsutsugamushi (strain Ikeda) (Rickettsia tsutsugamushi).